The chain runs to 116 residues: Large ribosomal subunit protein bL19 (116 aa).

Belongs to the bacterial ribosomal protein bL19 family.

This protein is located at the 30S-50S ribosomal subunit interface and may play a role in the structure and function of the aminoacyl-tRNA binding site. This is Large ribosomal subunit protein bL19 from Solidesulfovibrio magneticus (strain ATCC 700980 / DSM 13731 / RS-1) (Desulfovibrio magneticus).